Consider the following 933-residue polypeptide: C-1-tetrahydrofolate synthase, cytoplasmic (933 aa).

The methylenetetrahydrofolate dehydrogenase and cyclohydrolase stretch occupies residues 1-303; that stretch reads MWEPQGSLDP…DRLLAPTWPL (303 aa). Residues 51-55 and 98-100 each bind substrate; these read YIRMK and VQM. Residues 170 to 172 and S195 each bind NADP(+); that span reads GRS. Residue 270 to 274 participates in substrate binding; sequence PGGVG. Residues 304-933 are formyltetrahydrofolate synthetase; that stretch reads RPLRITPLSP…TKTGEIEGLF (630 aa). 378–385 provides a ligand contact to ATP; that stretch reads TPLGEGKS.

This sequence in the N-terminal section; belongs to the tetrahydrofolate dehydrogenase/cyclohydrolase family. It in the C-terminal section; belongs to the formate--tetrahydrofolate ligase family. As to quaternary structure, homodimer.

The protein resides in the cytoplasm. It catalyses the reaction (6R)-5,10-methylene-5,6,7,8-tetrahydrofolate + NADP(+) = (6R)-5,10-methenyltetrahydrofolate + NADPH. The catalysed reaction is (6R)-5,10-methenyltetrahydrofolate + H2O = (6R)-10-formyltetrahydrofolate + H(+). The enzyme catalyses (6S)-5,6,7,8-tetrahydrofolate + formate + ATP = (6R)-10-formyltetrahydrofolate + ADP + phosphate. It participates in one-carbon metabolism; tetrahydrofolate interconversion. The sequence is that of C-1-tetrahydrofolate synthase, cytoplasmic from Spodoptera frugiperda (Fall armyworm).